Here is a 243-residue protein sequence, read N- to C-terminus: Alanyl-tRNA editing protein AlaX-M (243 aa).

4 residues coordinate Zn(2+): His105, His109, Cys208, and His212.

The protein belongs to the class-II aminoacyl-tRNA synthetase family. Editing domain AlaX-M subfamily. Zn(2+) is required as a cofactor.

The protein resides in the cytoplasm. In terms of biological role, functions in trans to edit the amino acid moiety from incorrectly charged Ser-tRNA(Ala) or Gly-tRNA(Ala). Has no activity on incorrectly charged Ser-tRNA(Thr), nor on correctly charged Ala-tRNA(Ala) or Ser-tRNA(Ser). The polypeptide is Alanyl-tRNA editing protein AlaX-M (alaXM) (Methanosarcina barkeri (strain Fusaro / DSM 804)).